The chain runs to 657 residues: uncharacterized protein (657 aa).

Residues serine 518 and histidine 631 each act as charge relay system in the active site.

Belongs to the peptidase S9C family.

This is an uncharacterized protein from Bacillus subtilis (strain 168).